Reading from the N-terminus, the 3010-residue chain is Probable polyketide synthase 2 (3010 aa).

The Ketosynthase family 3 (KS3) domain maps to 9-432; that stretch reads SRDVAVIGIG…GSNACLLLSE (424 aa). Residues Cys-174, His-313, and His-353 each act as for beta-ketoacyl synthase activity in the active site. Residues 629–662 form an acyl/malonyl transferase region; it reads GINPSINVGHSFGEISSACCSGMLDLETACFIVY. The active-site For acyl/malonyl transferase activity is Ser-639. Residues 944-1063 form an N-terminal hotdog fold region; that stretch reads ATQLGYRNDV…ARFSVLKHNS (120 aa). The region spanning 944–1235 is the PKS/mFAS DH domain; it reads ATQLGYRNDV…YSSISTDIKN (292 aa). His-976 serves as the catalytic Proton acceptor; for dehydratase activity. The C-terminal hotdog fold stretch occupies residues 1080-1235; the sequence is NWTTIKRKEF…YSSISTDIKN (156 aa). Catalysis depends on Asp-1146, which acts as the Proton donor; for dehydratase activity. Positions 2482-2559 constitute a Carrier domain; it reads DNELSIRDDI…QLIQAVIQAV (78 aa). Ser-2519 carries the O-(pantetheine 4'-phosphoryl)serine modification.

The cofactor is pantetheine 4'-phosphate.

In terms of biological role, probable polyketide synthase. The polypeptide is Probable polyketide synthase 2 (pks2) (Dictyostelium discoideum (Social amoeba)).